The chain runs to 227 residues: Leucyl/phenylalanyl-tRNA--protein transferase (227 aa).

Belongs to the L/F-transferase family.

It localises to the cytoplasm. It catalyses the reaction N-terminal L-lysyl-[protein] + L-leucyl-tRNA(Leu) = N-terminal L-leucyl-L-lysyl-[protein] + tRNA(Leu) + H(+). It carries out the reaction N-terminal L-arginyl-[protein] + L-leucyl-tRNA(Leu) = N-terminal L-leucyl-L-arginyl-[protein] + tRNA(Leu) + H(+). The catalysed reaction is L-phenylalanyl-tRNA(Phe) + an N-terminal L-alpha-aminoacyl-[protein] = an N-terminal L-phenylalanyl-L-alpha-aminoacyl-[protein] + tRNA(Phe). Functionally, functions in the N-end rule pathway of protein degradation where it conjugates Leu, Phe and, less efficiently, Met from aminoacyl-tRNAs to the N-termini of proteins containing an N-terminal arginine or lysine. The polypeptide is Leucyl/phenylalanyl-tRNA--protein transferase (Afipia carboxidovorans (strain ATCC 49405 / DSM 1227 / KCTC 32145 / OM5) (Oligotropha carboxidovorans)).